The sequence spans 133 residues: Phosphoribosyl-AMP cyclohydrolase (133 aa).

Residue Asp-82 participates in Mg(2+) binding. Cys-83 provides a ligand contact to Zn(2+). Residues Asp-84 and Asp-86 each contribute to the Mg(2+) site. Zn(2+) is bound by residues Cys-100 and Cys-107.

It belongs to the PRA-CH family. In terms of assembly, homodimer. Mg(2+) serves as cofactor. Requires Zn(2+) as cofactor.

It is found in the cytoplasm. It catalyses the reaction 1-(5-phospho-beta-D-ribosyl)-5'-AMP + H2O = 1-(5-phospho-beta-D-ribosyl)-5-[(5-phospho-beta-D-ribosylamino)methylideneamino]imidazole-4-carboxamide. Its pathway is amino-acid biosynthesis; L-histidine biosynthesis; L-histidine from 5-phospho-alpha-D-ribose 1-diphosphate: step 3/9. In terms of biological role, catalyzes the hydrolysis of the adenine ring of phosphoribosyl-AMP. The sequence is that of Phosphoribosyl-AMP cyclohydrolase from Aromatoleum aromaticum (strain DSM 19018 / LMG 30748 / EbN1) (Azoarcus sp. (strain EbN1)).